A 283-amino-acid polypeptide reads, in one-letter code: Elongation factor Ts (283 aa).

The involved in Mg(2+) ion dislocation from EF-Tu stretch occupies residues 80-83 (TDFV).

It belongs to the EF-Ts family.

Its subcellular location is the cytoplasm. Functionally, associates with the EF-Tu.GDP complex and induces the exchange of GDP to GTP. It remains bound to the aminoacyl-tRNA.EF-Tu.GTP complex up to the GTP hydrolysis stage on the ribosome. This chain is Elongation factor Ts, found in Cronobacter sakazakii (strain ATCC BAA-894) (Enterobacter sakazakii).